We begin with the raw amino-acid sequence, 630 residues long: MELQPPEASIAVVSIPRQLPGSHSEAGVQGLSAGDDSELGSHCVAQTGLELLASGDPLPSASQNAEMIETGSDCVTQAGLQLLASSDPPALASKNAEVTGTMSQDTEVDMKEVELNELEPEKQPMNAASGAAMSLAGAEKNGLVKIKVAEDEAEAAAAAKFTGLSKEELLKVAGSPGWVRTRWALLLLFWLGWLGMLAGAVVIIVRAPRCRELPAQKWWHTGALYRIGDLQAFQGHGAGNLAGLKGRLDYLSSLKVKGLVLGPIHKNQKDDVAQTDLLQIDPNFGSKEDFDSLLQSAKKKSIRVILDLTPNYRGENSWFSTQVDTVATKVKDALEFWLQAGVDGFQVRDIENLKDASSFLAEWQNITKGFSEDRLLIAGTNSSDLQQILSLLESNKDLLLTSSYLSDSGSTGEHTKSLVTQYLNATGNRWCSWSLSQARLLTSFLPAQLLRLYQLMLFTLPGTPVFSYGDEIGLDAAALPGQPMEAPVMLWDESSFPDIPGAVSANMTVKGQSEDPGSLLSLFRRLSDQRSKERSLLHGDFHAFSAGPGLFSYIRHWDQNERFLVVLNFGDVGLSAGLQASDLPASASLPAKADLLLSTQPGREEGSPLELERLKLEPHEGLLLRFPYAA.

At M1 the chain carries N-acetylmethionine. E2 is subject to N-acetylserine. At E2 the chain carries Phosphoserine. The disordered stretch occupies residues 15–39 (IPRQLPGSHSEAGVQGLSAGDDSEL). The Cytoplasmic portion of the chain corresponds to 102-184 (MSQDTEVDMK…SPGWVRTRWA (83 aa)). Phosphoserine is present on S103. At T106 the chain carries Phosphothreonine. Phosphoserine is present on S134. K147 participates in a covalent cross-link: Glycyl lysine isopeptide (Lys-Gly) (interchain with G-Cter in ubiquitin). The residue at position 165 (S165) is a Phosphoserine. A Glycyl lysine isopeptide (Lys-Gly) (interchain with G-Cter in SUMO2) cross-link involves residue K166. The helical; Signal-anchor for type II membrane protein transmembrane segment at 185–205 (LLLLFWLGWLGMLAGAVVIIV) threads the bilayer. Topologically, residues 206–630 (RAPRCRELPA…GLLLRFPYAA (425 aa)) are extracellular. N-linked (GlcNAc...) asparagine glycosylation is found at N365 and N381. S406, S408, and S410 each carry phosphoserine. N-linked (GlcNAc...) (complex) asparagine glycosylation is present at N424. N506 carries N-linked (GlcNAc...) asparagine glycosylation. Phosphoserine is present on residues S527 and S531.

Disulfide-linked heterodimer with a non-glycosylated catalytic light subunit (SLC7A5, SLC7A6, SLC7A7, SLC7A8, SLC7A10 or SLC7A11). Interacts with TLCD3A/CT120. Interacts with ICAM1. Constitutively and specifically associates with beta-1 integrins (alpha-2/beta-1, alpha-3/beta-1, alpha-5/beta-1 and alpha-6/beta-1), but minimally with alpha-4/beta-1. Interacts with LAPTM4B; recruits SLC3A2 and SLC7A5/LAT1 to lysosomes to promote leucine uptake into these organelles and is required for mTORC1 activation. In terms of assembly, (Microbial infection) Interacts with hepatitis C virus/HCV envelope glycoprotein E2; the interaction may facilitate viral entry into host cell. In terms of processing, N-glycosylated; N-glycosylation is crucial for trafficking and stability of SLC3A2 to the plasma membrane. Phosphorylation on Ser-406; Ser-408 or Ser-410 and on Ser-527 or Ser-531 by ecto-protein kinases favors heterotypic cell-cell interactions. In terms of tissue distribution, expressed ubiquitously in all tissues tested with highest levels detected in kidney, placenta and testis and weakest level in thymus. During gestation, expression in the placenta was significantly stronger at full-term than at the mid-trimester stage. Expressed in HUVECS and at low levels in resting peripheral blood T-lymphocytes and quiescent fibroblasts. Also expressed in fetal liver and in the astrocytic process of primary astrocytic gliomas. Expressed in retinal endothelial cells and in the intestinal epithelial cell line C2BBe1.

The protein localises to the apical cell membrane. It localises to the cell membrane. Its subcellular location is the cell junction. The protein resides in the lysosome membrane. It is found in the melanosome. The protein localises to the basolateral cell membrane. In terms of biological role, acts as a chaperone that facilitates biogenesis and trafficking of functional transporters heterodimers to the plasma membrane. Forms heterodimer with SLC7 family transporters (SLC7A5, SLC7A6, SLC7A7, SLC7A8, SLC7A10 and SLC7A11), a group of amino-acid antiporters. Heterodimers function as amino acids exchangers, the specificity of the substrate depending on the SLC7A subunit. Heterodimers SLC3A2/SLC7A6 or SLC3A2/SLC7A7 mediate the uptake of dibasic amino acids. Heterodimer SLC3A2/SLC7A11 functions as an antiporter by mediating the exchange of extracellular anionic L-cystine and intracellular L-glutamate across the cellular plasma membrane. SLC3A2/SLC7A10 translocates small neutral L- and D-amino acids across the plasma membrane. SLC3A2/SLC75 or SLC3A2/SLC7A8 translocates neutral amino acids with broad specificity, thyroid hormones and L-DOPA. SLC3A2 is essential for plasma membrane localization, stability, and the transport activity of SLC7A5 and SLC7A8. When associated with LAPTM4B, the heterodimer SLC7A5 is recruited to lysosomes to promote leucine uptake into these organelles, and thereby mediates mTORC1 activation. Modulates integrin-related signaling and is essential for integrin-dependent cell spreading, migration and tumor progression. Its function is as follows. (Microbial infection) In case of hepatitis C virus/HCV infection, the complex formed by SLC3A2 and SLC7A5/LAT1 plays a role in HCV propagation by facilitating viral entry into host cell and increasing L-leucine uptake-mediated mTORC1 signaling activation, thereby contributing to HCV-mediated pathogenesis. (Microbial infection) Acts as a receptor for malaria parasite Plasmodium vivax (Thai isolate) in immature red blood cells. The sequence is that of Amino acid transporter heavy chain SLC3A2 from Homo sapiens (Human).